Here is a 589-residue protein sequence, read N- to C-terminus: MSILLEKIKTLPPNPGCYLFKNTKDTIIYVGKAKNLKKRVQSYFTKRNNLKTAMLIEETQDFFYIITNNEQEALILEANLIKTHTPKYNFKLLDDKTYPYIEITKEKHPQLKISRFKQIPPGKIIFGPYPNLKSTKETLKLLHLLYPLRRCQLASKKPCLHFHINQCLGACAGKTINYKPNIDAITKFLKGNIKDILKKLHHLMQKASEKMFYEKAQEYRDIIDSIKQTTKKQLISNQKLKNCDIFAYAFNQDQIAIQILKIRQGNIVDSYRSVFSYVGFVCENILTYLNCYYQKNIKPDIIITGKNQDENILQQTITNQTLLEQILQTKVNIYHKGDKKKLFLLALKNAQNDLSHNNLIYQSKDQKIQEALNKLAIIFNKDIKRIDVFDNSQLFGKAFVAARIVFNHFEFDKKLYRTFHIKGELPNEYQAFEETLTRCYNKGKEAENDATDLILVDGSLVQLRQSQKTLKKLGYEIPLGALQKNNKHQLTHLVTFQEKLMLEQDPNLFHFLKSLSEEVHRFAVSFHRKTKKKLDYKTTLSNIKGVGVVRKKAILNHFESLEAIKKATLQDFQKIGINQKLFLLIKKSL.

The GIY-YIG domain occupies 13-90 (PNPGCYLFKN…IKTHTPKYNF (78 aa)). A UVR domain is found at 194 to 229 (KDILKKLHHLMQKASEKMFYEKAQEYRDIIDSIKQT).

The protein belongs to the UvrC family. In terms of assembly, interacts with UvrB in an incision complex.

Its subcellular location is the cytoplasm. The UvrABC repair system catalyzes the recognition and processing of DNA lesions. UvrC both incises the 5' and 3' sides of the lesion. The N-terminal half is responsible for the 3' incision and the C-terminal half is responsible for the 5' incision. The sequence is that of UvrABC system protein C from Aster yellows witches'-broom phytoplasma (strain AYWB).